Reading from the N-terminus, the 380-residue chain is Asporin (380 aa).

Positions 1–14 are cleaved as a signal peptide; the sequence is MKEYVLLLFLALCS. The propeptide occupies 15 to 32; that stretch reads AKPFFSPSHIALKNMMLK. Acidic residues predominate over residues 35 to 54; the sequence is EDTDDDDDDDDDDDDDDEDN. Positions 35–59 are disordered; that stretch reads EDTDDDDDDDDDDDDDDEDNSLFPT. Serine 55 carries O-linked (GalNAc...) serine glycosylation. Residues 66 to 102 enclose the LRRNT domain; the sequence is FFPFDLFPMCPFGCQCYSRVVHCSDLGLTSVPTNIPF. 2 disulfides stabilise this stretch: cysteine 75–cysteine 81 and cysteine 79–cysteine 88. LRR repeat units follow at residues 103–124, 127–148, 151–173, 174–193, 196–219, 242–263, 266–287, 290–312, 313–334, 335–357, and 358–380; these read DTRM…DFKG, SLYG…AFLT, KLRR…PKSL, AELR…TFKG, ALHV…AFEG, TLLE…DFKR, ELQR…SLAN, RVRE…PELK, YLQI…DFCP, TVPK…VKYW, and EMQP…NFGM. The tract at residues 166–212 is interaction with TGFB1; sequence PLNLPKSLAELRIHENKVKKIQKDTFKGMNALHVLEMSANPLDNNGI. The N-linked (GlcNAc...) asparagine glycan is linked to asparagine 282. Residues cysteine 333 and cysteine 366 are joined by a disulfide bond.

This sequence belongs to the small leucine-rich proteoglycan (SLRP) family. SLRP class I subfamily. In terms of assembly, interacts with TGFB1, TGFB2 and TGFB3. DCN, BGN, and FMOD inhibit binding to TGFB1. Interacts with BMP2. Interacts in vitro with type II collagen. Interacts with type I collagen. DCN can inhibit collagen binding. In terms of processing, there is no serine/glycine dipeptide sequence expected for the attachment of O-linked glycosaminoglycans and this is probably not a proteoglycan. The O-linked polysaccharide on 54-Ser is probably the mucin type linked to GalNAc. The N-linked glycan at Asn-282 is composed of variable structures of GlcNAc, mannose, fucose, HexNAc and hexose. Higher levels in osteoarthritic articular cartilage, aorta, uterus. Moderate expression in small intestine, heart, liver, bladder, ovary, stomach, and in the adrenal, thyroid, and mammary glands. Low expression in trachea, bone marrow, and lung. Colocalizes with TGFB1 in chondrocytes within osteoarthritic (OA) lesions of articular cartilage.

It localises to the secreted. Its subcellular location is the extracellular space. The protein localises to the extracellular matrix. Functionally, negatively regulates periodontal ligament (PDL) differentiation and mineralization to ensure that the PDL is not ossified and to maintain homeostasis of the tooth-supporting system. Inhibits BMP2-induced cytodifferentiation of PDL cells by preventing its binding to BMPR1B/BMP type-1B receptor, resulting in inhibition of BMP-dependent activation of SMAD proteins. Critical regulator of TGF-beta in articular cartilage and plays an essential role in cartilage homeostasis and osteoarthritis (OA) pathogenesis. Negatively regulates chondrogenesis in the articular cartilage by blocking the TGF-beta/receptor interaction on the cell surface and inhibiting the canonical TGF-beta/Smad signal. Binds calcium and plays a role in osteoblast-driven collagen biomineralization activity. The chain is Asporin (ASPN) from Homo sapiens (Human).